A 1034-amino-acid chain; its full sequence is Error-prone DNA polymerase (1034 aa).

Belongs to the DNA polymerase type-C family. DnaE2 subfamily.

The protein localises to the cytoplasm. The enzyme catalyses DNA(n) + a 2'-deoxyribonucleoside 5'-triphosphate = DNA(n+1) + diphosphate. Functionally, DNA polymerase involved in damage-induced mutagenesis and translesion synthesis (TLS). It is not the major replicative DNA polymerase. The chain is Error-prone DNA polymerase from Pseudomonas fluorescens (strain ATCC BAA-477 / NRRL B-23932 / Pf-5).